A 297-amino-acid polypeptide reads, in one-letter code: Phosphoribosylaminoimidazole-succinocarboxamide synthase (297 aa).

The protein belongs to the SAICAR synthetase family.

It carries out the reaction 5-amino-1-(5-phospho-D-ribosyl)imidazole-4-carboxylate + L-aspartate + ATP = (2S)-2-[5-amino-1-(5-phospho-beta-D-ribosyl)imidazole-4-carboxamido]succinate + ADP + phosphate + 2 H(+). It functions in the pathway purine metabolism; IMP biosynthesis via de novo pathway; 5-amino-1-(5-phospho-D-ribosyl)imidazole-4-carboxamide from 5-amino-1-(5-phospho-D-ribosyl)imidazole-4-carboxylate: step 1/2. The protein is Phosphoribosylaminoimidazole-succinocarboxamide synthase of Corynebacterium urealyticum (strain ATCC 43042 / DSM 7109).